A 156-amino-acid polypeptide reads, in one-letter code: Large ribosomal subunit protein uL15 (156 aa).

Positions 1–48 are disordered; it reads MKLHDLKPTPGSRKDRKRVGRGPGGTDKTAGRGHKGQKSRSGAGKGAF.

This sequence belongs to the universal ribosomal protein uL15 family. In terms of assembly, part of the 50S ribosomal subunit. Contacts proteins L4, L21 and L35.

In terms of biological role, binds to the 23S rRNA. This Deinococcus radiodurans (strain ATCC 13939 / DSM 20539 / JCM 16871 / CCUG 27074 / LMG 4051 / NBRC 15346 / NCIMB 9279 / VKM B-1422 / R1) protein is Large ribosomal subunit protein uL15 (rplO).